The primary structure comprises 528 residues: Phosphoenolpyruvate carboxykinase (ATP) (528 aa).

Positions 56, 192, and 198 each coordinate substrate. Residues Lys-198, His-217, and 233–241 contribute to the ATP site; that span reads GLSGTGKTT. The Mn(2+) site is built by Lys-198 and His-217. A Mn(2+)-binding site is contributed by Asp-254. ATP-binding residues include Glu-282, Arg-319, and Thr-444. Residue Arg-319 participates in substrate binding.

Belongs to the phosphoenolpyruvate carboxykinase (ATP) family. The cofactor is Mn(2+).

The protein resides in the cytoplasm. The enzyme catalyses oxaloacetate + ATP = phosphoenolpyruvate + ADP + CO2. It functions in the pathway carbohydrate biosynthesis; gluconeogenesis. In terms of biological role, involved in the gluconeogenesis. Catalyzes the conversion of oxaloacetate (OAA) to phosphoenolpyruvate (PEP) through direct phosphoryl transfer between the nucleoside triphosphate and OAA. This chain is Phosphoenolpyruvate carboxykinase (ATP), found in Bacillus cereus (strain AH187).